A 287-amino-acid polypeptide reads, in one-letter code: Orotidine 5'-phosphate decarboxylase (287 aa).

Residue lysine 97 is the Proton donor of the active site.

The protein belongs to the OMP decarboxylase family. Type 2 subfamily.

It carries out the reaction orotidine 5'-phosphate + H(+) = UMP + CO2. It participates in pyrimidine metabolism; UMP biosynthesis via de novo pathway; UMP from orotate: step 2/2. In Clostridium perfringens (strain ATCC 13124 / DSM 756 / JCM 1290 / NCIMB 6125 / NCTC 8237 / Type A), this protein is Orotidine 5'-phosphate decarboxylase.